We begin with the raw amino-acid sequence, 454 residues long: Histidine--tRNA ligase (454 aa).

The protein belongs to the class-II aminoacyl-tRNA synthetase family. Homodimer.

It localises to the cytoplasm. It carries out the reaction tRNA(His) + L-histidine + ATP = L-histidyl-tRNA(His) + AMP + diphosphate + H(+). This chain is Histidine--tRNA ligase, found in Bacteroides fragilis (strain ATCC 25285 / DSM 2151 / CCUG 4856 / JCM 11019 / LMG 10263 / NCTC 9343 / Onslow / VPI 2553 / EN-2).